Consider the following 485-residue polypeptide: ATP-dependent protease ATPase subunit HslU (485 aa).

ATP contacts are provided by residues Ile22 and 64 to 69 (GVGKTE). The disordered stretch occupies residues 146 to 189 (KKTAATSAQPQDVSQASSGTTISLPSVSSTAQAEEHKAQNENDM). Residues 149 to 177 (AATSAQPQDVSQASSGTTISLPSVSSTAQ) show a composition bias toward polar residues. Residues 178 to 189 (AEEHKAQNENDM) show a composition bias toward basic and acidic residues. Residues Asp297, Glu363, and Arg435 each contribute to the ATP site.

It belongs to the ClpX chaperone family. HslU subfamily. A double ring-shaped homohexamer of HslV is capped on each side by a ring-shaped HslU homohexamer. The assembly of the HslU/HslV complex is dependent on binding of ATP.

It is found in the cytoplasm. ATPase subunit of a proteasome-like degradation complex; this subunit has chaperone activity. The binding of ATP and its subsequent hydrolysis by HslU are essential for unfolding of protein substrates subsequently hydrolyzed by HslV. HslU recognizes the N-terminal part of its protein substrates and unfolds these before they are guided to HslV for hydrolysis. This chain is ATP-dependent protease ATPase subunit HslU, found in Treponema denticola (strain ATCC 35405 / DSM 14222 / CIP 103919 / JCM 8153 / KCTC 15104).